The sequence spans 1028 residues: Beta-galactosidase (1028 aa).

Substrate contacts are provided by N104 and D203. D203 is a Na(+) binding site. Residues E418, H420, and E463 each coordinate Mg(2+). Substrate-binding positions include E463 and 539–542 (EYAH). Residue E463 is the Proton donor of the active site. Residue E539 is the Nucleophile of the active site. N599 is a Mg(2+) binding site. Positions 603 and 606 each coordinate Na(+). 2 residues coordinate substrate: N606 and W1004.

Belongs to the glycosyl hydrolase 2 family. Homotetramer. The cofactor is Mg(2+). Na(+) is required as a cofactor.

The catalysed reaction is Hydrolysis of terminal non-reducing beta-D-galactose residues in beta-D-galactosides.. This is Beta-galactosidase from Enterobacter sp. (strain 638).